Reading from the N-terminus, the 245-residue chain is tRNA pseudouridine synthase A (245 aa).

Aspartate 52 (nucleophile) is an active-site residue. A substrate-binding site is contributed by tyrosine 111.

This sequence belongs to the tRNA pseudouridine synthase TruA family. As to quaternary structure, homodimer.

It carries out the reaction uridine(38/39/40) in tRNA = pseudouridine(38/39/40) in tRNA. Its function is as follows. Formation of pseudouridine at positions 38, 39 and 40 in the anticodon stem and loop of transfer RNAs. The chain is tRNA pseudouridine synthase A from Wolbachia pipientis wMel.